Reading from the N-terminus, the 297-residue chain is Aspartate carbamoyltransferase catalytic subunit (297 aa).

The carbamoyl phosphate site is built by Arg49 and Thr50. Lys77 provides a ligand contact to L-aspartate. Carbamoyl phosphate contacts are provided by Arg99, His129, and Gln132. L-aspartate is bound by residues Arg162 and Arg215. Residues Gly256 and Pro257 each coordinate carbamoyl phosphate.

Belongs to the aspartate/ornithine carbamoyltransferase superfamily. ATCase family. Heterododecamer (2C3:3R2) of six catalytic PyrB chains organized as two trimers (C3), and six regulatory PyrI chains organized as three dimers (R2).

The catalysed reaction is carbamoyl phosphate + L-aspartate = N-carbamoyl-L-aspartate + phosphate + H(+). It participates in pyrimidine metabolism; UMP biosynthesis via de novo pathway; (S)-dihydroorotate from bicarbonate: step 2/3. Functionally, catalyzes the condensation of carbamoyl phosphate and aspartate to form carbamoyl aspartate and inorganic phosphate, the committed step in the de novo pyrimidine nucleotide biosynthesis pathway. The sequence is that of Aspartate carbamoyltransferase catalytic subunit from Legionella pneumophila (strain Corby).